The primary structure comprises 284 residues: 2-dehydro-3-deoxyphosphooctonate aldolase (284 aa).

Belongs to the KdsA family.

Its subcellular location is the cytoplasm. It catalyses the reaction D-arabinose 5-phosphate + phosphoenolpyruvate + H2O = 3-deoxy-alpha-D-manno-2-octulosonate-8-phosphate + phosphate. It functions in the pathway carbohydrate biosynthesis; 3-deoxy-D-manno-octulosonate biosynthesis; 3-deoxy-D-manno-octulosonate from D-ribulose 5-phosphate: step 2/3. Its pathway is bacterial outer membrane biogenesis; lipopolysaccharide biosynthesis. This Burkholderia cenocepacia (strain ATCC BAA-245 / DSM 16553 / LMG 16656 / NCTC 13227 / J2315 / CF5610) (Burkholderia cepacia (strain J2315)) protein is 2-dehydro-3-deoxyphosphooctonate aldolase.